A 238-amino-acid chain; its full sequence is uncharacterized protein (238 aa).

The signal sequence occupies residues 1 to 19 (MKINLFFVFLFELLHFVAA). Topologically, residues 20 to 197 (YSCEGDESAA…LALYGHLSQK (178 aa)) are lumenal. A helical membrane pass occupies residues 198–216 (YTPLGMNVAIFGISAYIMY). Over 217–238 (RSSKKAKQKQAAAAAAAAAKKK) the chain is Cytoplasmic.

The protein localises to the endoplasmic reticulum membrane. This is an uncharacterized protein from Schizosaccharomyces pombe (strain 972 / ATCC 24843) (Fission yeast).